The primary structure comprises 483 residues: Xylulose kinase (483 aa).

79 to 80 (MH) serves as a coordination point for substrate.

It belongs to the FGGY kinase family.

It catalyses the reaction D-xylulose + ATP = D-xylulose 5-phosphate + ADP + H(+). Its function is as follows. Catalyzes the phosphorylation of D-xylulose to D-xylulose 5-phosphate. This Staphylococcus xylosus protein is Xylulose kinase.